A 252-amino-acid polypeptide reads, in one-letter code: Centriole, cilia and spindle-associated protein (252 aa).

An N-acetylmethionine modification is found at M1. Positions 9-15 (SEYMKRY) match the ST]-E-Y-X(3)-Y motif 1; required for efficient microtubule binding and stabilization motif. The interval 49–163 (WDAWGPDSPS…RSTSKIKENK (115 aa)) is disordered. The segment covering 54–64 (PDSPSDSSASP) has biased composition (low complexity). Position 65 is a phosphoserine (S65). Over residues 108–125 (PKKDTEEKPEEHKTKETD) the composition is skewed to basic and acidic residues. S191 is modified (phosphoserine). Residues 242–248 (TEYMRCY) carry the ST]-E-Y-X(3)-Y motif 2; required for efficient microtubule binding and stabilization motif.

The protein belongs to the CCSAP family. As to quaternary structure, associates with microtubules; the association occurs on polyglutamylated tubulin.

The protein resides in the cytoplasm. It localises to the cytoskeleton. It is found in the microtubule organizing center. The protein localises to the centrosome. Its subcellular location is the centriole. The protein resides in the spindle. It localises to the cilium basal body. It is found in the cilium axoneme. The protein localises to the cell projection. Its subcellular location is the axon. The protein resides in the cilium. Functionally, plays a role in microtubule (MT) stabilization and this stabilization involves the maintenance of NUMA1 at the spindle poles. Colocalizes with polyglutamylated MTs to promote MT stabilization and regulate bipolar spindle formation in mitosis. Binding of CCSAP to centrosomes and the spindle around centrosomes during mitosis inhibits MT depolymerization, thereby stabilizing the mitotic spindle. May play a role in embryonic development. May be required for proper cilia beating. The polypeptide is Centriole, cilia and spindle-associated protein (Ccsap) (Mus musculus (Mouse)).